The following is a 64-amino-acid chain: Large ribosomal subunit protein bL32 (64 aa).

Residues 1–64 are disordered; sequence MAVQQNRKTR…APKHGDETEE (64 aa). Positions 7–16 are enriched in basic residues; the sequence is RKTRSKRGMR.

This sequence belongs to the bacterial ribosomal protein bL32 family.

The chain is Large ribosomal subunit protein bL32 from Methylococcus capsulatus (strain ATCC 33009 / NCIMB 11132 / Bath).